The sequence spans 102 residues: uncharacterized protein (102 aa).

Residues Thr27–Phe47 form a helical membrane-spanning segment.

The protein localises to the membrane. This is an uncharacterized protein from Saccharomyces cerevisiae (strain ATCC 204508 / S288c) (Baker's yeast).